A 138-amino-acid polypeptide reads, in one-letter code: Ribosome-binding factor A (138 aa).

The interval 112–138 (EARTQGQAPAADVEPAPGAAPDDEAEE) is disordered. Residues 119 to 131 (APAADVEPAPGAA) show a composition bias toward low complexity.

It belongs to the RbfA family. In terms of assembly, monomer. Binds 30S ribosomal subunits, but not 50S ribosomal subunits or 70S ribosomes.

Its subcellular location is the cytoplasm. Functionally, one of several proteins that assist in the late maturation steps of the functional core of the 30S ribosomal subunit. Associates with free 30S ribosomal subunits (but not with 30S subunits that are part of 70S ribosomes or polysomes). Required for efficient processing of 16S rRNA. May interact with the 5'-terminal helix region of 16S rRNA. The polypeptide is Ribosome-binding factor A (Anaeromyxobacter sp. (strain K)).